Consider the following 131-residue polypeptide: C-type natriuretic peptide 1 (131 aa).

The first 22 residues, 1-22, serve as a signal peptide directing secretion; it reads MLCPVLLCATLLLLTPFEVTEA. Residues 23–109 constitute a propeptide that is removed on maturation; the sequence is RALHPSADAV…KRAEPDRSRR (87 aa). C115 and C131 are joined by a disulfide.

Belongs to the natriuretic peptide family. As to expression, brain and spinal cord.

Its subcellular location is the secreted. Its function is as follows. Exhibits natriuretic and vasodepressant activity. Has cGMP-stimulating activity. May help to regulate body fluid homeostasis in a variety of aquatic environments. This chain is C-type natriuretic peptide 1, found in Oryzias latipes (Japanese rice fish).